Here is a 154-residue protein sequence, read N- to C-terminus: Large ribosomal subunit protein uL30 (154 aa).

This sequence belongs to the universal ribosomal protein uL30 family. Part of the 50S ribosomal subunit.

This Methanoregula boonei (strain DSM 21154 / JCM 14090 / 6A8) protein is Large ribosomal subunit protein uL30.